The sequence spans 298 residues: Small ribosomal subunit protein uS2 (298 aa).

Basic and acidic residues-rich tracts occupy residues 237–259 and 280–298; these read QSKE…DGQK and PKSE…ENKG. Residues 237–298 form a disordered region; sequence QSKELDDKAD…DAAKLPENKG (62 aa).

It belongs to the universal ribosomal protein uS2 family.

The protein is Small ribosomal subunit protein uS2 of Neorickettsia sennetsu (strain ATCC VR-367 / Miyayama) (Ehrlichia sennetsu).